Consider the following 431-residue polypeptide: UDP-N-acetylmuramate--L-alanine ligase (431 aa).

ATP is bound at residue glycine 108 to serine 114.

The protein belongs to the MurCDEF family.

The protein localises to the cytoplasm. The catalysed reaction is UDP-N-acetyl-alpha-D-muramate + L-alanine + ATP = UDP-N-acetyl-alpha-D-muramoyl-L-alanine + ADP + phosphate + H(+). Its pathway is cell wall biogenesis; peptidoglycan biosynthesis. Functionally, cell wall formation. In Macrococcus caseolyticus (strain JCSC5402) (Macrococcoides caseolyticum), this protein is UDP-N-acetylmuramate--L-alanine ligase.